We begin with the raw amino-acid sequence, 587 residues long: Sedolisin (587 aa).

A signal peptide spans 1-32; it reads MKSSAAKQTVLCLNRYAVVALPLAIASFAAFG. A propeptide spans 33 to 215 (removed in mature form); that stretch reads ASPASTLWAP…VGERSAAKTL (183 aa). One can recognise a Peptidase S53 domain in the interval 219–583; it reads TAKGHNPTEF…AKLSAYIRSN (365 aa). The segment at 276 to 295 is disordered; the sequence is TIQTGSSNGDYSDDQQGQGE. Residues glutamate 295 and aspartate 299 each act as charge relay system in the active site. Cysteine 352 and cysteine 391 are disulfide-bonded. Catalysis depends on serine 502, which acts as the Charge relay system. Residues aspartate 543, valine 544, glycine 559, glycine 561, and aspartate 563 each contribute to the Ca(2+) site. A propeptide spans 586-587 (removed in mature form); that stretch reads GH.

Ca(2+) serves as cofactor. Post-translationally, autocatalytically processed.

It is found in the periplasm. It catalyses the reaction Hydrolysis of the B chain of insulin at 13-Glu-|-Ala-14, 15-Leu-|-Tyr-16 and 25-Phe-|-Tyr-26 and angiotensin I at 4-Tyr-|-Ile-5. A good synthetic substrate is Lys-Pro-Ile-Glu-Phe-|-Phe(NO2)-Arg-Leu.. With respect to regulation, inhibited by 1,2-epoxy-3-(p-nitrophenoxy)propane (EPNP), but not by carboxyl proteinase inhibitors, such as pepstatin, pepstatin Ac (S-PI) and diazoacetyl-DL-norleucine methyl ester (DAN). Inhibited by tyrostatin, pseudo-tyrostatin, AcIPF, AcIAF, chymostatin and pseudo-iodotyrostatin. Its function is as follows. Pepstatin-insensitive serine-carboxyl proteinase. In vitro can hydrolyze various synthetic peptides. Also shows activity on acid-denatured hemoglobin and on casein. In Pseudomonas sp. (strain 101) (Achromobacter parvulus T1), this protein is Sedolisin (pcp).